We begin with the raw amino-acid sequence, 767 residues long: Transient receptor potential cation channel subfamily V member 6 (767 aa).

Residues 1–33 form a disordered region; that stretch reads MGPLQREGRPALGDANVAPGSSPGGVWHQPQPP. Residues 1 to 366 are Cytoplasmic-facing; sequence MGPLQREGRP…SLKWKRYGRP (366 aa). ANK repeat units follow at residues 84 to 114, 118 to 147, and 156 to 185; these read IWESPLLLAAKENNVQALIKLLKFEGCEVHQ, MGETALHIAALYDNLEAAMVLMEAAPELVF, and EGQTALHIAVINQNVNLVRALLARGASVSA. The interaction with calmodulin stretch occupies residues 133–143; sequence EAAMVLMEAAP. 2 positions are modified to phosphotyrosine; by SRC: Tyr201 and Tyr202. 3 ANK repeats span residues 202–231, 235–276, and 278–307; these read YGEHPLSFAACVGSEEIVRLLIEHGADIRA, LGNT…LVPN, and QGLTPFKLAGVEGNIVMFQHLMQKRKHIQW. Residues 367 to 387 traverse the membrane as a helical segment; the sequence is YFCVLGAIYVLYIICFTMCCV. At 388-424 the chain is on the extracellular side; sequence YRPLKPRITNRTNPRDNTLLQQKLLQEAYVTPKDDLR. Asn397 is a glycosylation site (N-linked (GlcNAc...) asparagine). The chain crosses the membrane as a helical span at residues 425-447; it reads LVGELVSIVGAVIILLVEIPDIF. The Cytoplasmic segment spans residues 448–462; that stretch reads RLGVTRFFGQTILGG. Residues 463–482 form a helical membrane-spanning segment; the sequence is PFHVIIVTYAFMVLVTMVMR. The Extracellular portion of the chain corresponds to 483–488; that stretch reads LTNSDG. A helical membrane pass occupies residues 489–508; that stretch reads EVVPMSFALVLGWCNVMYFA. Over 509–528 the chain is Cytoplasmic; it reads RGFQMLGPFTIMIQKMIFGD. The helical transmembrane segment at 529 to 551 threads the bilayer; the sequence is LMRFCWLMAVVILGFASAFYIIF. Residues 552-564 lie on the Extracellular side of the membrane; that stretch reads QTEDPDELGHFYD. Residues 565–584 constitute an intramembrane region (pore-forming); that stretch reads YPMALFSTFELFLTIIDGPA. The Selectivity filter motif lies at 580 to 584; sequence IDGPA. Asp581 contacts Ca(2+). The Extracellular portion of the chain corresponds to 585–595; that stretch reads NYDVDLPFMYS. The chain crosses the membrane as a helical span at residues 596-616; the sequence is ITYAAFAIIATLLMLNLLIAM. Topologically, residues 617 to 767 are cytoplasmic; that stretch reads MGDTHWRVAH…EDGEGWEYQI (151 aa). An interaction with S100A10 region spans residues 637–641; that stretch reads VATTV. Positions 689–707 are interaction with calmodulin; the sequence is AFQQQDDLYSEDLEKDSGE.

It belongs to the transient receptor (TC 1.A.4) family. TrpV subfamily. TRPV6 sub-subfamily. As to quaternary structure, homotetramer. Probably also forms heterotetramers with TRPV5. Interacts with TRPV5. Interacts with S100A10 and probably with the ANAX2-S100A10 heterotetramer. The interaction with S100A10 is required for the trafficking to the plasma membrane. Interacts with calmodulin. Interacts with BSPRY. Interacts with TCAF1 and TCAF2. Post-translationally, glycosylated. In terms of processing, phosphorylation at Tyr-201 and Tyr-202 by SRC leads to an increased calcium influx through the channel. Probably dephosphorylated at these sites by PTPN1. Expressed in duodenum, proximal jejunum, cecum, and colon.

The protein localises to the cell membrane. The catalysed reaction is Ca(2+)(in) = Ca(2+)(out). Functionally, calcium selective cation channel that mediates Ca(2+) uptake in various tissues, including the intestine. Important for normal Ca(2+) ion homeostasis in the body, including bone and skin. The channel is activated by low internal calcium level, probably including intracellular calcium store depletion, and the current exhibits an inward rectification. Inactivation includes both a rapid Ca(2+)-dependent and a slower Ca(2+)-calmodulin-dependent mechanism; the latter may be regulated by phosphorylation. In vitro, is slowly inhibited by Mg(2+) in a voltage-independent manner. Heteromeric assembly with TRPV5 seems to modify channel properties. TRPV5-TRPV6 heteromultimeric concatemers exhibit voltage-dependent gating. The sequence is that of Transient receptor potential cation channel subfamily V member 6 (Trpv6) from Rattus norvegicus (Rat).